The primary structure comprises 2056 residues: E3 ubiquitin-protein ligase TRIP12 (2056 aa).

Polar residues-rich tracts occupy residues 1–10 (MSSRPNNNPG) and 18–27 (RNTAGAQPQE). Residues 1–440 (MSSRPNNNPG…SGESESDDSE (440 aa)) are disordered. Residues 39–51 (AENKTHSLPESRK) show a composition bias toward basic and acidic residues. Polar residues-rich tracts occupy residues 58–67 (KVQSNTTSGP) and 153–168 (SQEQ…STSK). Composition is skewed to low complexity over residues 213 to 226 (LSKL…SAKA) and 234 to 253 (SSSS…VSAA). Composition is skewed to polar residues over residues 317–327 (PGSSKTETSKP) and 363–375 (QKTT…TSRR). Basic and acidic residues predominate over residues 383–395 (AAAEARRQEKMAD). Positions 415 to 433 (GAAASSSVAGAVGMTTSGE) are enriched in low complexity. The region spanning 791–905 (MLKKGNAQNT…DPELAKSFIK (115 aa)) is the WWE domain. Over residues 1027–1042 (TTISTGSGTASGNSAA) the composition is skewed to low complexity. Disordered stretches follow at residues 1027 to 1147 (TTIS…ASKD), 1465 to 1500 (EEEE…DELW), and 1632 to 1651 (TNPE…PRLD). The segment covering 1069–1082 (KRKRLPKRGPRRPK) has biased composition (basic residues). Positions 1085–1094 (PPRDEDKVDN) are enriched in basic and acidic residues. Polar residues-rich tracts occupy residues 1095–1106 (QAKSPTTTQSPK) and 1119–1129 (RLSTQSNSNNI). A K-box region spans residues 1560–1634 (EIIPTSEFNN…AMQRLLDTNP (75 aa)). Positions 1949-2056 (PDHGYTHDSR…REGQQSFHLS (108 aa)) constitute an HECT domain. C2023 functions as the Glycyl thioester intermediate in the catalytic mechanism.

It belongs to the UPL family. K-HECT subfamily.

It localises to the nucleus. It is found in the nucleoplasm. It catalyses the reaction S-ubiquitinyl-[E2 ubiquitin-conjugating enzyme]-L-cysteine + [acceptor protein]-L-lysine = [E2 ubiquitin-conjugating enzyme]-L-cysteine + N(6)-ubiquitinyl-[acceptor protein]-L-lysine.. It participates in protein modification; protein ubiquitination. Functionally, E3 ubiquitin-protein ligase involved in ubiquitin fusion degradation (UFD) pathway and regulation of DNA repair. Part of the ubiquitin fusion degradation (UFD) pathway, a process that mediates ubiquitination of protein at their N-terminus, regardless of the presence of lysine residues in target proteins. Acts as a key regulator of DNA damage response by acting as a suppressor of RNF168, an E3 ubiquitin-protein ligase that promotes accumulation of 'Lys-63'-linked histone H2A and H2AX at DNA damage sites, thereby acting as a guard against excessive spreading of ubiquitinated chromatin at damaged chromosomes. This is E3 ubiquitin-protein ligase TRIP12 (trip12) from Xenopus tropicalis (Western clawed frog).